Here is a 351-residue protein sequence, read N- to C-terminus: MVTIPISASTPYDVVLDNQDRWIDSVDWSRYSMLWVVTDKHVESLYGESFRSTLKLTHPHVVSSVVEAGDASKSLSQLEQLVAEGLRHGCDRETLIVAFGGGMIGDLAGFLASVYMRGVPYIQVPTTILAHDSAVGGKVAVNHPLAKNAIGSFYQPSGVYYNVTRLNTLSVQEVRSGLGELLKHAYLSRYVLESSFEDDLFLDLNENEPLDWVSWLARGIRVKQAIVETDEREQGIRAWLNFGHTFGHALESVEAYRIPHGEAVLHGMVFAFLVSGDEVRAMRLFDWMRSNDVTPIDWQPFDRYVEKMIRDKKNRHGAIRFVLLRETITVESVQLEHLQQTFEQMKGWWER.

Residues 126–127, lysine 138, and lysine 147 contribute to the NAD(+) site; that span reads TT. Residues glutamate 180, histidine 244, and histidine 260 each contribute to the Zn(2+) site.

It belongs to the sugar phosphate cyclases superfamily. Dehydroquinate synthase family. Co(2+) is required as a cofactor. Requires Zn(2+) as cofactor. It depends on NAD(+) as a cofactor.

It localises to the cytoplasm. It catalyses the reaction 7-phospho-2-dehydro-3-deoxy-D-arabino-heptonate = 3-dehydroquinate + phosphate. It functions in the pathway metabolic intermediate biosynthesis; chorismate biosynthesis; chorismate from D-erythrose 4-phosphate and phosphoenolpyruvate: step 2/7. Functionally, catalyzes the conversion of 3-deoxy-D-arabino-heptulosonate 7-phosphate (DAHP) to dehydroquinate (DHQ). This chain is 3-dehydroquinate synthase, found in Exiguobacterium sp. (strain ATCC BAA-1283 / AT1b).